The primary structure comprises 879 residues: Phosphoenolpyruvate carboxylase (879 aa).

Active-site residues include His138 and Lys545.

Belongs to the PEPCase type 1 family. Mg(2+) is required as a cofactor.

It catalyses the reaction oxaloacetate + phosphate = phosphoenolpyruvate + hydrogencarbonate. Its function is as follows. Forms oxaloacetate, a four-carbon dicarboxylic acid source for the tricarboxylic acid cycle. This chain is Phosphoenolpyruvate carboxylase (ppc), found in Haemophilus influenzae (strain ATCC 51907 / DSM 11121 / KW20 / Rd).